Consider the following 505-residue polypeptide: AMP phosphorylase (505 aa).

Residues Gly170, 196 to 201 (SRAITS), and Thr205 contribute to the AMP site. Asp258 acts as the Proton donor in catalysis. AMP-binding residues include Ser266 and Lys290.

It belongs to the thymidine/pyrimidine-nucleoside phosphorylase family. Type 2 subfamily.

It carries out the reaction AMP + phosphate = alpha-D-ribose 1,5-bisphosphate + adenine. The enzyme catalyses CMP + phosphate = cytosine + alpha-D-ribose 1,5-bisphosphate. It catalyses the reaction UMP + phosphate = alpha-D-ribose 1,5-bisphosphate + uracil. Functionally, catalyzes the conversion of AMP and phosphate to adenine and ribose 1,5-bisphosphate (R15P). Exhibits phosphorylase activity toward CMP and UMP in addition to AMP. Functions in an archaeal AMP degradation pathway, together with R15P isomerase and RubisCO. This is AMP phosphorylase from Methanococcus maripaludis (strain DSM 14266 / JCM 13030 / NBRC 101832 / S2 / LL).